The chain runs to 228 residues: Ribonuclease 3 1 (228 aa).

The 124-residue stretch at 1-124 folds into the RNase III domain; the sequence is MYKLLMFRDD…VIGAYYLDNN (124 aa). E37 lines the Mg(2+) pocket. D41 is a catalytic residue. Mg(2+) is bound by residues S110 and E113. E113 is an active-site residue. In terms of domain architecture, DRBM spans 153 to 223; the sequence is DSKNRFQEWV…AENALANLNK (71 aa).

Belongs to the ribonuclease III family. Homodimer. Mg(2+) serves as cofactor.

It localises to the cytoplasm. The catalysed reaction is Endonucleolytic cleavage to 5'-phosphomonoester.. Functionally, digests double-stranded RNA. Involved in the processing of primary rRNA transcript to yield the immediate precursors to the large and small rRNAs (23S and 16S). Processes some mRNAs, and tRNAs when they are encoded in the rRNA operon. Processes pre-crRNA and tracrRNA of type II CRISPR loci if present in the organism. This Nostoc sp. (strain PCC 7120 / SAG 25.82 / UTEX 2576) protein is Ribonuclease 3 1.